The chain runs to 436 residues: Putative ankyrin repeat protein FPV026 (436 aa).

ANK repeat units lie at residues 63–92 (EGIRVLRMAIKFERIDIIKILLEYGVNVNE), 101–130 (TCYSVLHFAVDIGNKDIVSILLYAGADVNN), 135–164 (LRNTPLHLAIQQKNTDIAKLLLDSGADQNI), 168–197 (NGNIPIQIAVTYNDEKMVNILLQYSPNLEI), 201–230 (NGRTVLHNAVLDKNINIVSLLLENGALVDS), and 234–266 (EGYTILLSSVNRTDPFIIKMLLHRGANPFFLNI). The region spanning 409–436 (TSTITNLPYEVIYIIVEKMTNKELCEIR) is the F-box domain.

The polypeptide is Putative ankyrin repeat protein FPV026 (Fowlpox virus (strain NVSL) (FPV)).